Reading from the N-terminus, the 180-residue chain is Cell division protein ZapC (180 aa).

This sequence belongs to the ZapC family. In terms of assembly, interacts directly with FtsZ.

It is found in the cytoplasm. In terms of biological role, contributes to the efficiency of the cell division process by stabilizing the polymeric form of the cell division protein FtsZ. Acts by promoting interactions between FtsZ protofilaments and suppressing the GTPase activity of FtsZ. The polypeptide is Cell division protein ZapC (Vibrio vulnificus (strain CMCP6)).